Reading from the N-terminus, the 327-residue chain is MMSKVKTRIYFCGGAGFRIGELFHGYHEDVCYIDTSVQNKHKHNTDDNTIIIEADTKLADQTARKRAIGMGKDRKAAAELISAHIPAIAHHFPAGDTNIVVYSMGGASGSTIGPSLVSHLQQQGEVVVSVVIGSYDSDISLRNSSGSLKTFEGVSSVSKVPMIINYHENVEGIPQSMVNQNILEVLNALVILFNQEHQSLDLMDITNWAHFHKHHDVPVQTVQLHVCFDRQEAQAILDPISIASLYTDPDRDVSISTVLTRTTGYADPEKYDFDQMHFVINGLSIEDIRKRLEERREMMNRAKANMRKRQSTLDVDDQATSSGLVFD.

GTP is bound by residues 14 to 15 and 107 to 109; these read GA and ASG. The disordered stretch occupies residues 303-327; sequence KANMRKRQSTLDVDDQATSSGLVFD. Over residues 318 to 327 the composition is skewed to polar residues; the sequence is QATSSGLVFD.

The protein belongs to the FtsZ family. PhuZ subfamily. As to quaternary structure, homomultimer. Polymerizes in a strictly GTP-dependent manner.

The protein resides in the host cytoplasm. The catalysed reaction is GTP + H2O = GDP + phosphate + H(+). Its activity is regulated as follows. The non-hydrolyzable GTP analog GMPCPP stabilizes filaments, which never disassemble. In terms of biological role, a tubulin-like GTPase that forms filaments, which are required for positioning viral DNA and capsids in the middle of the host cell for optimal replication. The motor component of a partition system which pushes phage DNA (encased by protein gp105) to the center of the bacterial host cell. Also required for movement of phage capsids to the vicinity of the viral DNA and rotation of the encased viral DNA at midcell. Forms filaments during the lytic phase, which position phage DNA at the center of the bacterial host cell. Filaments have a three-stranded intertwined architecture and form a spindle-like cytoskeleton within the infected cell. Has GTPase activity. Filaments grow at the plus end and depolymerize at the minus end, a process called treadmilling, and switch from growing in a polar manner to catastrophic depolymerization, i.e. they display dynamic instability, like tubulin. In infected host cells the filament ends close to the cell pole are relatively stable, while the other end near the phage DNA is highly dynamic. Both capsid movement and DNA rotation probably require treadmilling. This chain is Phage tubulin-like protein, found in Pseudomonas phage phiKZ.